The chain runs to 855 residues: DNA mismatch repair protein MutS (855 aa).

616–623 (GPNMGGKS) serves as a coordination point for ATP.

It belongs to the DNA mismatch repair MutS family.

In terms of biological role, this protein is involved in the repair of mismatches in DNA. It is possible that it carries out the mismatch recognition step. This protein has a weak ATPase activity. In Escherichia coli O139:H28 (strain E24377A / ETEC), this protein is DNA mismatch repair protein MutS.